The chain runs to 576 residues: Glutamine-dependent NAD(+) synthetase (576 aa).

Positions 4 to 246 (LRVTLAQLNP…EEIITVDLDL (243 aa)) constitute a CN hydrolase domain. The active-site Proton acceptor; for glutaminase activity is Glu44. Lys112 acts as the For glutaminase activity in catalysis. Tyr118 is an L-glutamine binding site. Catalysis depends on Cys148, which acts as the Nucleophile; for glutaminase activity. 2 residues coordinate L-glutamine: Ser176 and Lys182. A ligase region spans residues 292 to 576 (PVREEEMFRA…PITNRFKEPL (285 aa)). Residue 321–328 (GLSGGMDS) coordinates ATP. Asn404 lines the deamido-NAD(+) pocket. Thr428 contacts ATP. The deamido-NAD(+) site is built by Glu433 and Lys545.

In the C-terminal section; belongs to the NAD synthetase family.

The catalysed reaction is deamido-NAD(+) + L-glutamine + ATP + H2O = L-glutamate + AMP + diphosphate + NAD(+) + H(+). Its pathway is cofactor biosynthesis; NAD(+) biosynthesis; NAD(+) from deamido-NAD(+) (L-Gln route): step 1/1. Functionally, catalyzes the ATP-dependent amidation of deamido-NAD to form NAD. Uses L-glutamine as a nitrogen source. The polypeptide is Glutamine-dependent NAD(+) synthetase (nadE2) (Thermotoga maritima (strain ATCC 43589 / DSM 3109 / JCM 10099 / NBRC 100826 / MSB8)).